A 440-amino-acid chain; its full sequence is Platelet-activating factor acetylhydrolase (440 aa).

Positions Met-1–Pro-21 are cleaved as a signal peptide. N-linked (GlcNAc...) asparagine glycosylation is found at Asn-59, Asn-75, and Asn-199. Ser-272 acts as the Nucleophile in catalysis. Active-site charge relay system residues include Asp-295 and His-350.

This sequence belongs to the AB hydrolase superfamily. Lipase family. N-glycosylated. Plasma.

The protein resides in the secreted. The protein localises to the extracellular space. The catalysed reaction is a 1-O-alkyl-2-acetyl-sn-glycero-3-phosphocholine + H2O = a 1-O-alkyl-sn-glycero-3-phosphocholine + acetate + H(+). The enzyme catalyses 1-O-decyl-2-acetyl-sn-glycero-3-phosphocholine + H2O = 1-O-decyl-sn-glycero-3-phosphocholine + acetate + H(+). It catalyses the reaction 1-O-dodecyl-2-acetyl-sn-glycero-3-phosphocholine + H2O = 1-O-dodecyl-sn-glycero-3-phosphocholine + acetate + H(+). It carries out the reaction 1-O-tetradecyl-2-acetyl-sn-glycero-3-phosphocholine + H2O = 1-O-tetradecyl-sn-glycero-3-phosphocholine + acetate + H(+). The catalysed reaction is 1-O-hexadecyl-2-acetyl-sn-glycero-3-phosphocholine + H2O = 1-O-hexadecyl-sn-glycero-3-phosphocholine + acetate + H(+). The enzyme catalyses 1-O-octadecyl-2-acetyl-sn-glycero-3-phosphocholine + H2O = 1-O-octadecyl-sn-glycero-3-phosphocholine + acetate + H(+). It catalyses the reaction 1-hexadecanoyl-2-acetyl-sn-glycero-3-phosphocholine + H2O = 1-hexadecanoyl-sn-glycero-3-phosphocholine + acetate + H(+). It carries out the reaction 1-hexadecanoyl-2-propionyl-sn-glycero-3-phosphocholine + H2O = propanoate + 1-hexadecanoyl-sn-glycero-3-phosphocholine + H(+). The catalysed reaction is 1-hexadecanoyl-2-butanoyl-sn-glycero-3-phosphocholine + H2O = butanoate + 1-hexadecanoyl-sn-glycero-3-phosphocholine + H(+). The enzyme catalyses 1-hexadecanoyl-2-pentanoyl-sn-glycero-3-phosphocholine + H2O = pentanoate + 1-hexadecanoyl-sn-glycero-3-phosphocholine + H(+). It catalyses the reaction 1-hexadecanoyl-2-glutaroyl-sn-glycero-3-phosphocholine + H2O = glutarate + 1-hexadecanoyl-sn-glycero-3-phosphocholine + H(+). It carries out the reaction 1-hexadecanoyl-2-(5-oxopentanoyl)-sn-glycero-3-phosphocholine + H2O = 5-oxopentanoate + 1-hexadecanoyl-sn-glycero-3-phosphocholine + H(+). The catalysed reaction is 1-hexadecanoyl-2-(9-oxononanoyl)-sn-glycero-3-phosphocholine + H2O = 9-oxononanoate + 1-hexadecanoyl-sn-glycero-3-phosphocholine + H(+). The enzyme catalyses 1-hexadecanoyl-2-[9-hydroperoxy-(10E-octadecenoyl)]-sn-glycero-3-phosphocholine + H2O = 9-hydroperoxy-10E-octadecenoate + 1-hexadecanoyl-sn-glycero-3-phosphocholine + H(+). It catalyses the reaction 1-hexadecanoyl-2-(10-hydroperoxy-8E-octadecenoyl)-sn-glycero-3-phosphocholine + H2O = 10-hydroperoxy-(8E)-octadecenoate + 1-hexadecanoyl-sn-glycero-3-phosphocholine + H(+). Functionally, lipoprotein-associated calcium-independent phospholipase A2 involved in phospholipid catabolism during inflammatory and oxidative stress response. At the lipid-aqueous interface, hydrolyzes the ester bond of fatty acyl group attached at sn-2 position of phospholipids (phospholipase A2 activity). Specifically targets phospholipids with a short-chain fatty acyl group at sn-2 position. Can hydrolyze phospholipids with long fatty acyl chains, only if they carry oxidized functional groups. Hydrolyzes and inactivates platelet-activating factor (PAF, 1-O-alkyl-2-acetyl-sn-glycero-3-phosphocholine), a potent pro-inflammatory signaling lipid that acts through PTAFR on various innate immune cells. Hydrolyzes oxidatively truncated phospholipids carrying an aldehyde group at omega position, preventing their accumulation in lipoprotein particles and uncontrolled pro-inflammatory effects. As part of high-density lipoprotein (HDL) particles, can hydrolyze phospholipids having long-chain fatty acyl hydroperoxides at sn-2 position and protect against potential accumulation of these oxylipins in the vascular wall. Catalyzes the release from membrane phospholipids of F2-isoprostanes, lipid biomarkers of cellular oxidative damage. This Mus musculus (Mouse) protein is Platelet-activating factor acetylhydrolase (Pla2g7).